Reading from the N-terminus, the 116-residue chain is Ribosome-binding factor A (116 aa).

The protein belongs to the RbfA family. As to quaternary structure, monomer. Binds 30S ribosomal subunits, but not 50S ribosomal subunits or 70S ribosomes.

It is found in the cytoplasm. Its function is as follows. One of several proteins that assist in the late maturation steps of the functional core of the 30S ribosomal subunit. Associates with free 30S ribosomal subunits (but not with 30S subunits that are part of 70S ribosomes or polysomes). Required for efficient processing of 16S rRNA. May interact with the 5'-terminal helix region of 16S rRNA. In Streptococcus sanguinis (strain SK36), this protein is Ribosome-binding factor A.